A 456-amino-acid polypeptide reads, in one-letter code: Bifunctional protein GlmU (456 aa).

The tract at residues 1 to 229 (MLNSAMSVVI…LSEVEGVNNR (229 aa)) is pyrophosphorylase. UDP-N-acetyl-alpha-D-glucosamine is bound by residues 11 to 14 (LAAG), K25, Q76, 81 to 82 (GT), 103 to 105 (YGD), G140, E154, N169, and N227. D105 is a binding site for Mg(2+). N227 contributes to the Mg(2+) binding site. Positions 230–250 (LQLSRLERVYQSEQAEKLLLA) are linker. An N-acetyltransferase region spans residues 251–456 (GVMLRDPARF…QGWQRPAKKK (206 aa)). Positions 333 and 351 each coordinate UDP-N-acetyl-alpha-D-glucosamine. H363 serves as the catalytic Proton acceptor. Y366 and N377 together coordinate UDP-N-acetyl-alpha-D-glucosamine. Residues A380, 386 to 387 (NY), S405, A423, and R440 contribute to the acetyl-CoA site.

In the N-terminal section; belongs to the N-acetylglucosamine-1-phosphate uridyltransferase family. It in the C-terminal section; belongs to the transferase hexapeptide repeat family. In terms of assembly, homotrimer. It depends on Mg(2+) as a cofactor.

Its subcellular location is the cytoplasm. It catalyses the reaction alpha-D-glucosamine 1-phosphate + acetyl-CoA = N-acetyl-alpha-D-glucosamine 1-phosphate + CoA + H(+). The catalysed reaction is N-acetyl-alpha-D-glucosamine 1-phosphate + UTP + H(+) = UDP-N-acetyl-alpha-D-glucosamine + diphosphate. It functions in the pathway nucleotide-sugar biosynthesis; UDP-N-acetyl-alpha-D-glucosamine biosynthesis; N-acetyl-alpha-D-glucosamine 1-phosphate from alpha-D-glucosamine 6-phosphate (route II): step 2/2. The protein operates within nucleotide-sugar biosynthesis; UDP-N-acetyl-alpha-D-glucosamine biosynthesis; UDP-N-acetyl-alpha-D-glucosamine from N-acetyl-alpha-D-glucosamine 1-phosphate: step 1/1. It participates in bacterial outer membrane biogenesis; LPS lipid A biosynthesis. In terms of biological role, catalyzes the last two sequential reactions in the de novo biosynthetic pathway for UDP-N-acetylglucosamine (UDP-GlcNAc). The C-terminal domain catalyzes the transfer of acetyl group from acetyl coenzyme A to glucosamine-1-phosphate (GlcN-1-P) to produce N-acetylglucosamine-1-phosphate (GlcNAc-1-P), which is converted into UDP-GlcNAc by the transfer of uridine 5-monophosphate (from uridine 5-triphosphate), a reaction catalyzed by the N-terminal domain. This Citrobacter koseri (strain ATCC BAA-895 / CDC 4225-83 / SGSC4696) protein is Bifunctional protein GlmU.